Reading from the N-terminus, the 368-residue chain is Peptide chain release factor 2 (368 aa).

At Q248 the chain carries N5-methylglutamine.

The protein belongs to the prokaryotic/mitochondrial release factor family. In terms of processing, methylated by PrmC. Methylation increases the termination efficiency of RF2.

It is found in the cytoplasm. Its function is as follows. Peptide chain release factor 2 directs the termination of translation in response to the peptide chain termination codons UGA and UAA. The sequence is that of Peptide chain release factor 2 from Corynebacterium glutamicum (strain R).